Here is a 478-residue protein sequence, read N- to C-terminus: Protein FAM83E (478 aa).

The tract at residues 1-293 is DUF1669; the sequence is MAASQLAALE…LYAASCPLPP (293 aa). Disordered regions lie at residues 292 to 334, 359 to 436, and 452 to 478; these read PPAP…PLAH, RART…LPPA, and DATF…GGQP. Over residues 309–319 the composition is skewed to basic residues; sequence RSPHRVSRRRS. Residues 379-388 are compositionally biased toward polar residues; sequence RLSQLSGSSD.

This sequence belongs to the FAM83 family. As to quaternary structure, directly interacts (via DUF1669) with CSNK1A1, CSNK1A1L, CSNK1D and CSNK1E. May interact with RAF1.

Its subcellular location is the cytoplasm. The protein resides in the perinuclear region. In terms of biological role, may play a role in MAPK signaling. The polypeptide is Protein FAM83E (Homo sapiens (Human)).